The sequence spans 335 residues: Pregnancy-specific beta-1-glycoprotein 2 (335 aa).

Residues 1–34 form the signal peptide; the sequence is MGPLSAPPCTEHIKWKGLLVTASLLNFWNLPTTA. In terms of domain architecture, Ig-like V-type spans 35–144; sequence QVTIEAQPPK…TGYFTFTLYL (110 aa). Residues N61, N104, N111, and N199 are each glycosylated (N-linked (GlcNAc...) asparagine). 2 consecutive Ig-like C2-type domains span residues 147-234 and 239-317; these read PKPS…VTLN and PDLP…TSLT. 2 disulfides stabilise this stretch: C169–C217 and C261–C301.

This sequence belongs to the immunoglobulin superfamily. CEA family.

Its subcellular location is the secreted. The polypeptide is Pregnancy-specific beta-1-glycoprotein 2 (PSG2) (Homo sapiens (Human)).